A 244-amino-acid polypeptide reads, in one-letter code: tRNA (guanine-N(7)-)-methyltransferase (244 aa).

S-adenosyl-L-methionine is bound by residues E74, E99, D126, and D149. The active site involves D149. Residues K153, D185, and 222-225 (TKFE) each bind substrate.

Belongs to the class I-like SAM-binding methyltransferase superfamily. TrmB family.

The catalysed reaction is guanosine(46) in tRNA + S-adenosyl-L-methionine = N(7)-methylguanosine(46) in tRNA + S-adenosyl-L-homocysteine. The protein operates within tRNA modification; N(7)-methylguanine-tRNA biosynthesis. Its function is as follows. Catalyzes the formation of N(7)-methylguanine at position 46 (m7G46) in tRNA. The polypeptide is tRNA (guanine-N(7)-)-methyltransferase (Colwellia psychrerythraea (strain 34H / ATCC BAA-681) (Vibrio psychroerythus)).